A 319-amino-acid polypeptide reads, in one-letter code: Zinc finger protein C19B12.07c (319 aa).

Residues phenylalanine 146–histidine 170 form a C2H2-type zinc finger.

The protein belongs to the ZNF277 family.

Its subcellular location is the nucleus. The protein is Zinc finger protein C19B12.07c of Schizosaccharomyces pombe (strain 972 / ATCC 24843) (Fission yeast).